Reading from the N-terminus, the 381-residue chain is L-lactate dehydrogenase (381 aa).

Residues 1–380 (MIISSASDYR…KPEALVDLSK (380 aa)) enclose the FMN hydroxy acid dehydrogenase domain. A substrate-binding site is contributed by Tyr-24. FMN contacts are provided by Ser-106 and Gln-127. Substrate is bound at residue Tyr-129. Thr-155 is a binding site for FMN. Substrate is bound at residue Arg-164. Position 251 (Lys-251) interacts with FMN. Residue His-275 is the Proton acceptor of the active site. Arg-278 is a binding site for substrate. Residue 306-330 (DSGIRNGLDIVRMLALGADATMLGR) coordinates FMN.

It belongs to the FMN-dependent alpha-hydroxy acid dehydrogenase family. It depends on FMN as a cofactor.

Its subcellular location is the cell inner membrane. It carries out the reaction (S)-lactate + A = pyruvate + AH2. Catalyzes the conversion of L-lactate to pyruvate. Is coupled to the respiratory chain. The protein is L-lactate dehydrogenase of Haemophilus influenzae (strain 86-028NP).